Consider the following 75-residue polypeptide: Exodeoxyribonuclease 7 small subunit (75 aa).

It belongs to the XseB family. As to quaternary structure, heterooligomer composed of large and small subunits.

Its subcellular location is the cytoplasm. It carries out the reaction Exonucleolytic cleavage in either 5'- to 3'- or 3'- to 5'-direction to yield nucleoside 5'-phosphates.. Functionally, bidirectionally degrades single-stranded DNA into large acid-insoluble oligonucleotides, which are then degraded further into small acid-soluble oligonucleotides. The polypeptide is Exodeoxyribonuclease 7 small subunit (Listeria innocua serovar 6a (strain ATCC BAA-680 / CLIP 11262)).